Consider the following 100-residue polypeptide: Small ribosomal subunit protein uS14c (100 aa).

A disordered region spans residues 1–54; sequence MARKSLIQRERKRQKLEQKFHSIRRSSKKEISKVSSLSGKWEIHGKLQSPPRNS.

Belongs to the universal ribosomal protein uS14 family. Part of the 30S ribosomal subunit.

It is found in the plastid. The protein localises to the chloroplast. Functionally, binds 16S rRNA, required for the assembly of 30S particles. The chain is Small ribosomal subunit protein uS14c from Piper cenocladum (Ant piper).